A 208-amino-acid polypeptide reads, in one-letter code: Outer-membrane lipoprotein LolB (208 aa).

The first 23 residues, 1-23, serve as a signal peptide directing secretion; the sequence is MKPIQKLSLFRLLPLSCVLLLTA. A lipid anchor (N-palmitoyl cysteine) is attached at Cys-24. Cys-24 carries S-diacylglycerol cysteine lipidation.

The protein belongs to the LolB family. In terms of assembly, monomer.

Its subcellular location is the cell outer membrane. Functionally, plays a critical role in the incorporation of lipoproteins in the outer membrane after they are released by the LolA protein. The sequence is that of Outer-membrane lipoprotein LolB from Photorhabdus laumondii subsp. laumondii (strain DSM 15139 / CIP 105565 / TT01) (Photorhabdus luminescens subsp. laumondii).